The chain runs to 89 residues: Small ribosomal subunit protein uS15 (89 aa).

It belongs to the universal ribosomal protein uS15 family. Part of the 30S ribosomal subunit. Forms a bridge to the 50S subunit in the 70S ribosome, contacting the 23S rRNA.

One of the primary rRNA binding proteins, it binds directly to 16S rRNA where it helps nucleate assembly of the platform of the 30S subunit by binding and bridging several RNA helices of the 16S rRNA. Its function is as follows. Forms an intersubunit bridge (bridge B4) with the 23S rRNA of the 50S subunit in the ribosome. This chain is Small ribosomal subunit protein uS15, found in Desulfotalea psychrophila (strain LSv54 / DSM 12343).